A 239-amino-acid chain; its full sequence is Ribitol-5-phosphate cytidylyltransferase (239 aa).

Residues 7-10 and 80-86 each bind CTP; these read FAGG and GETGQMS.

The protein belongs to the IspD/TarI cytidylyltransferase family. TarI subfamily.

The enzyme catalyses D-ribitol 5-phosphate + CTP + H(+) = CDP-L-ribitol + diphosphate. It participates in cell wall biogenesis; poly(ribitol phosphate) teichoic acid biosynthesis. Functionally, catalyzes the transfer of the cytidylyl group of CTP to D-ribitol 5-phosphate. The sequence is that of Ribitol-5-phosphate cytidylyltransferase from Streptococcus agalactiae serotype III (strain NEM316).